The following is a 258-amino-acid chain: Phosphate import ATP-binding protein PstB (258 aa).

Residues 5 to 247 (IDVSGLTAYY…SQIFSNPKEK (243 aa)) enclose the ABC transporter domain. 37–44 (GPSGCGKS) is an ATP binding site.

This sequence belongs to the ABC transporter superfamily. Phosphate importer (TC 3.A.1.7) family. In terms of assembly, the complex is composed of two ATP-binding proteins (PstB), two transmembrane proteins (PstC and PstA) and a solute-binding protein (PstS).

Its subcellular location is the cell membrane. It carries out the reaction phosphate(out) + ATP + H2O = ADP + 2 phosphate(in) + H(+). Functionally, part of the ABC transporter complex PstSACB involved in phosphate import. Responsible for energy coupling to the transport system. The chain is Phosphate import ATP-binding protein PstB from Frankia casuarinae (strain DSM 45818 / CECT 9043 / HFP020203 / CcI3).